The following is a 291-amino-acid chain: ATP synthase gamma chain (291 aa).

The protein belongs to the ATPase gamma chain family. As to quaternary structure, F-type ATPases have 2 components, CF(1) - the catalytic core - and CF(0) - the membrane proton channel. CF(1) has five subunits: alpha(3), beta(3), gamma(1), delta(1), epsilon(1). CF(0) has three main subunits: a, b and c.

The protein localises to the cell membrane. In terms of biological role, produces ATP from ADP in the presence of a proton gradient across the membrane. The gamma chain is believed to be important in regulating ATPase activity and the flow of protons through the CF(0) complex. The chain is ATP synthase gamma chain from Buchnera aphidicola subsp. Baizongia pistaciae (strain Bp).